Reading from the N-terminus, the 345-residue chain is Dimethyladenosine transferase 1, mitochondrial (345 aa).

A mitochondrion-targeting transit peptide spans 1–27 (MAAPGKLSTCRLPPLPTIREIIKLFRL). Residues Leu-38, Gly-63, Glu-85, Lys-86, Asp-111, Val-112, and Asn-141 each contribute to the S-adenosyl-L-methionine site.

Belongs to the class I-like SAM-binding methyltransferase superfamily. rRNA adenine N(6)-methyltransferase family. KsgA subfamily. In terms of assembly, interacts with mitochondrial RNA polymerase POLRMT. Interacts with TFAM. Bound to the maturing mtSSU until the late stages of assembly.

It localises to the mitochondrion. The enzyme catalyses adenosine(N)/adenosine(N+1) in rRNA + 4 S-adenosyl-L-methionine = N(6)-dimethyladenosine(N)/N(6)-dimethyladenosine(N+1) in rRNA + 4 S-adenosyl-L-homocysteine + 4 H(+). In terms of biological role, mitochondrial methyltransferase which uses S-adenosyl methionine to dimethylate two highly conserved adjacent adenosine residues (A1583 and A1584) within the loop of helix 45 at the 3-prime end of 12S rRNA, thereby regulating the assembly or stability of the small subunit of the mitochondrial ribosome. Also required for basal transcription of mitochondrial DNA, probably via its interaction with POLRMT and TFAM. Stimulates transcription independently of the methyltransferase activity. The chain is Dimethyladenosine transferase 1, mitochondrial (TFB1M) from Macaca fascicularis (Crab-eating macaque).